Reading from the N-terminus, the 385-residue chain is Glutamate 5-kinase (385 aa).

Lysine 17 provides a ligand contact to ATP. 3 residues coordinate substrate: serine 64, aspartate 151, and asparagine 165. Position 185 to 186 (185 to 186 (SD)) interacts with ATP. Residues 291–367 (SGTVRVDAGA…NQIDNILGYN (77 aa)) enclose the PUA domain.

Belongs to the glutamate 5-kinase family.

The protein localises to the cytoplasm. It catalyses the reaction L-glutamate + ATP = L-glutamyl 5-phosphate + ADP. The protein operates within amino-acid biosynthesis; L-proline biosynthesis; L-glutamate 5-semialdehyde from L-glutamate: step 1/2. Its function is as follows. Catalyzes the transfer of a phosphate group to glutamate to form L-glutamate 5-phosphate. The sequence is that of Glutamate 5-kinase from Methanosarcina acetivorans (strain ATCC 35395 / DSM 2834 / JCM 12185 / C2A).